Reading from the N-terminus, the 386-residue chain is Protein phosphatase methylesterase 1 (386 aa).

The disordered stretch occupies residues 20–48 (ILEKLKGGQEPNSNEEGSDSIGDLPSLKN). Catalysis depends on residues S194, D222, and H348.

It belongs to the AB hydrolase superfamily.

The enzyme catalyses [phosphatase 2A protein]-C-terminal L-leucine methyl ester + H2O = [phosphatase 2A protein]-C-terminal L-leucine + methanol + H(+). Its function is as follows. Demethylates proteins that have been reversibly carboxymethylated. Demethylates the phosphatase PP2A catalytic subunit. The sequence is that of Protein phosphatase methylesterase 1 (PPE1) from Candida glabrata (strain ATCC 2001 / BCRC 20586 / JCM 3761 / NBRC 0622 / NRRL Y-65 / CBS 138) (Yeast).